Consider the following 75-residue polypeptide: Translation initiation factor IF-1, chloroplastic (75 aa).

The 72-residue stretch at 1–72 folds into the S1-like domain; it reads MKKQNLIHAE…TKGRIIYRLS (72 aa).

The protein belongs to the IF-1 family. In terms of assembly, component of the 30S ribosomal translation pre-initiation complex which assembles on the 30S ribosome in the order IF-2 and IF-3, IF-1 and N-formylmethionyl-tRNA(fMet); mRNA recruitment can occur at any time during PIC assembly.

It localises to the plastid. The protein localises to the chloroplast. In terms of biological role, one of the essential components for the initiation of protein synthesis. Stabilizes the binding of IF-2 and IF-3 on the 30S subunit to which N-formylmethionyl-tRNA(fMet) subsequently binds. Helps modulate mRNA selection, yielding the 30S pre-initiation complex (PIC). Upon addition of the 50S ribosomal subunit IF-1, IF-2 and IF-3 are released leaving the mature 70S translation initiation complex. This is Translation initiation factor IF-1, chloroplastic from Pinus koraiensis (Korean pine).